The sequence spans 4924 residues: Hydroxamate-type ferrichrome siderophore peptide synthetase (4924 aa).

Carrier domains follow at residues 715 to 791 (NQSE…ILLK), 2172 to 2246 (DGFQ…KRRR), 3254 to 3328 (NVVE…NTQT), and 4402 to 4478 (IHLN…QYEK). S752, S2206, S3288, and S4439 each carry O-(pantetheine 4'-phosphoryl)serine.

This sequence belongs to the ATP-dependent AMP-binding enzyme family.

The protein resides in the cytoplasm. Functionally, involved in intracellular and extracellular ferrichrome siderophore biosynthesis. The sequence is that of Hydroxamate-type ferrichrome siderophore peptide synthetase (sib1) from Schizosaccharomyces pombe (strain 972 / ATCC 24843) (Fission yeast).